The following is a 151-amino-acid chain: Probable cGMP 3',5'-cyclic phosphodiesterase subunit delta (151 aa).

This sequence belongs to the PDE6D/unc-119 family. Interacts with Pde6.

The protein resides in the nucleus. Its subcellular location is the cytoplasm. This is Probable cGMP 3',5'-cyclic phosphodiesterase subunit delta from Drosophila willistoni (Fruit fly).